Reading from the N-terminus, the 522-residue chain is Tryptophan 2-halogenase (522 aa).

Positions 17, 36, 42, 44, 45, 48, 103, 127, and 296 each coordinate FAD. Positions 307 and 308 each coordinate chloride. V309 provides a ligand contact to FAD.

This sequence belongs to the flavin-dependent halogenase family.

In terms of biological role, involved in the incorporation of a chlorinated tryptophan residue into halogenated forms of the secondary metabolites called chondramides. The sequence is that of Tryptophan 2-halogenase from Chondromyces crocatus.